The sequence spans 405 residues: MSAAAKSQVPEEAAPGCEEEPKGKTLLTWGSLFGHRSEKIVFTKGDGSPEESLLTVTITETTVIESDLGVWSSRALIYLTLWFFFSFCTLFLNKYILSLLEGEPSMLGAVQMLSTTLIGCVKIFVPCCLYQHKTRLSYPPNFIMTMLFVGLMRFATVVLGLVSLKNVAVSFAETVKSSAPIFTVIMSRMILGEYTGLLVNLSLIPVMGGLALCTATEISFNILGFSAALSTNIMDCLQNVFSKKLLSGDKYRFSAPELQFYTSAAAVALLIPAWTFFMDIPVIGRSGKSFSYSQDIVLLLLTDGALFHLQSVTAYALMGKISPVTFSVASTVKHALSIWLSIIVFGNKITSLSAIGTILVTLGVLLYNKARQYQQETMQSLVTATSRNPEDDTEPLVPQDSRQHH.

The interval 1–22 (MSAAAKSQVPEEAAPGCEEEPK) is disordered. A run of 10 helical transmembrane segments spans residues 76-96 (LIYL…NKYI), 106-126 (MLGA…IFVP), 142-162 (FIMT…LGLV), 167-187 (VAVS…VIMS), 195-215 (TGLL…LCTA), 219-241 (SFNI…QNVF), 264-284 (AAAV…PVIG), 296-316 (IVLL…TAYA), 326-346 (FSVA…IVFG), and 347-367 (NKIT…VLLY). Residues 380 to 405 (SLVTATSRNPEDDTEPLVPQDSRQHH) are disordered.

This sequence belongs to the TPT transporter family. SLC35E subfamily.

The protein localises to the membrane. Its function is as follows. Putative transporter. The polypeptide is Solute carrier family 35 member E2A (Slc35e2a) (Mus musculus (Mouse)).